Consider the following 379-residue polypeptide: Leukocyte elastase inhibitor (379 aa).

Residue Met1 is modified to N-acetylmethionine. Residues Lys137 and Lys177 each carry the N6-acetyllysine modification. Ser300 is modified (phosphoserine). The tract at residues 351–379 is CARD-binding motif (CBM); that stretch reads NFTADHPFLFFIRHNSSGSILFLGRFSSP.

This sequence belongs to the serpin family. Ov-serpin subfamily. As to quaternary structure, monomer. Interacts (via C-terminus) with CASP1; CASP4 (via CARD domain) and CASP5; these interactions regulate the activity of inflammatory caspases. Interacts with PRTN3. Interacts with GZMH. In human bone marrow, present in all CD45+ populations. Expression levels are highest in the neutrophil lineage, intermediate in monocytic, and lowest in lymphocytic lineage. Within the neutrophil lineage, expression is highest in promyelocytes.

The protein resides in the secreted. Its subcellular location is the cytoplasm. It is found in the cytolytic granule. The protein localises to the early endosome. Functionally, neutrophil serine protease inhibitor that plays an essential role in the regulation of the innate immune response, inflammation and cellular homeostasis. Acts primarily to protect the cell from proteases released in the cytoplasm during stress or infection. These proteases are important in killing microbes but when released from granules, these potent enzymes also destroy host proteins and contribute to mortality. Regulates the activity of the neutrophil proteases elastase, cathepsin G, proteinase-3, chymase, chymotrypsin, and kallikrein-3. Also acts as a potent intracellular inhibitor of GZMH by directly blocking its proteolytic activity. During inflammation, limits the activity of inflammatory caspases CASP1, CASP4 and CASP5 by suppressing their caspase-recruitment domain (CARD) oligomerization and enzymatic activation. When secreted, promotes the proliferation of beta-cells via its protease inhibitory function. In Homo sapiens (Human), this protein is Leukocyte elastase inhibitor (SERPINB1).